The sequence spans 70 residues: Small ribosomal subunit protein bS18c (70 aa).

It belongs to the bacterial ribosomal protein bS18 family. In terms of assembly, part of the 30S ribosomal subunit.

The protein localises to the plastid. The protein resides in the chloroplast. This is Small ribosomal subunit protein bS18c from Gracilaria tenuistipitata var. liui (Red alga).